A 97-amino-acid chain; its full sequence is MVFVRRPWPALTTVLLALLVCLGALVDAYPIKPEAPREDASPEELNRYYASLRHYLNLVTRQRYGKRDGPDTLLSKTFFPDGEDRPVRSRSEGPDLW.

Positions 1–28 are cleaved as a signal peptide; that stretch reads MVFVRRPWPALTTVLLALLVCLGALVDA. Ser-41 carries the phosphoserine modification. Position 64 is a tyrosine amide (Tyr-64). A disordered region spans residues 65 to 97; sequence GKRDGPDTLLSKTFFPDGEDRPVRSRSEGPDLW. A propeptide spanning residues 68 to 97 is cleaved from the precursor; the sequence is DGPDTLLSKTFFPDGEDRPVRSRSEGPDLW. Basic and acidic residues predominate over residues 82-97; sequence GEDRPVRSRSEGPDLW.

The protein belongs to the NPY family. Post-translationally, the peptide YY form is cleaved at Pro-30 by the prolyl endopeptidase FAP (seprase) activity (in vitro) to generate peptide YY(3-36).

The protein resides in the secreted. This gut peptide inhibits exocrine pancreatic secretion, has a vasoconstrictory action and inhibitis jejunal and colonic mobility. The chain is Peptide YY (PYY) from Homo sapiens (Human).